The sequence spans 215 residues: Protein GET1 (215 aa).

Residues 1-4 lie on the Lumenal side of the membrane; that stretch reads MINL. The helical transmembrane segment at 5 to 24 threads the bilayer; it reads ALVIFLCTLLNQIVSWVGKS. Residues 25 to 108 lie on the Cytoplasmic side of the membrane; the sequence is VLQEIAFTAY…SFSKKFSTLL (84 aa). The stretch at 73 to 94 forms a coiled coil; it reads AKLRRKLDKGLADLEKTNNTLS. The chain crosses the membrane as a helical span at residues 109 to 129; the sequence is WLMTTGAQFLLSWWFRKQPIF. At 130–153 the chain is on the lumenal side; it reads WLPEGWVPYPVAWLLSFPSAPIGS. A helical transmembrane segment spans residues 154-170; it reads VSSGAWGAICRRVLSTL. Over 171-215 the chain is Cytoplasmic; that stretch reads QEIIQSLLAPSPAATGPVPTGPSSAKNDQPEAKIEALALEHEKLD. The disordered stretch occupies residues 182–202; the sequence is PAATGPVPTGPSSAKNDQPEA.

The protein belongs to the WRB/GET1 family. As to quaternary structure, interacts with GET3.

The protein resides in the endoplasmic reticulum membrane. Its function is as follows. Required for the post-translational delivery of tail-anchored (TA) proteins to the endoplasmic reticulum. Acts as a membrane receptor for soluble GET3, which recognizes and selectively binds the transmembrane domain of TA proteins in the cytosol. This chain is Protein GET1, found in Cryptococcus neoformans var. neoformans serotype D (strain JEC21 / ATCC MYA-565) (Filobasidiella neoformans).